Reading from the N-terminus, the 302-residue chain is ATP synthase gamma chain (302 aa).

Belongs to the ATPase gamma chain family. F-type ATPases have 2 components, CF(1) - the catalytic core - and CF(0) - the membrane proton channel. CF(1) has five subunits: alpha(3), beta(3), gamma(1), delta(1), epsilon(1). CF(0) has three main subunits: a, b and c.

The protein localises to the cell membrane. In terms of biological role, produces ATP from ADP in the presence of a proton gradient across the membrane. The gamma chain is believed to be important in regulating ATPase activity and the flow of protons through the CF(0) complex. The sequence is that of ATP synthase gamma chain from Enterococcus faecalis (strain ATCC 700802 / V583).